The primary structure comprises 1630 residues: Merozoite surface protein 1 (1630 aa).

An N-terminal signal peptide occupies residues 1–19; that stretch reads MKIIFFLCSFLFFIINTQC. The tract at residues 60-113 is disordered; that stretch reads TKGASAQSGTSGTSGTSGPSGPSGTSPSSRSNTLPRSNTSSGASPPADASDSDA. The tripeptide SG(TP) repeat stretch occupies residues 67-84; the sequence is SGTSGTSGTSGPSGPSGT. Positions 67–88 are enriched in low complexity; the sequence is SGTSGTSGTSGPSGPSGTSPSS. The span at 89-98 shows a compositional bias: polar residues; sequence RSNTLPRSNT. N-linked (GlcNAc...) asparagine glycosylation occurs at N97. Positions 99–108 are enriched in low complexity; the sequence is SSGASPPADA. N259 carries N-linked (GlcNAc...) asparagine glycosylation. The segment at 680–755 is disordered; the sequence is KKNIKTEGQS…VPTPPAPVNN (76 aa). Polar residues-rich tracts occupy residues 685–695 and 702–713; these read TEGQSDNSEPS and GQATTKPGQQAG. Low complexity predominate over residues 721–732; the sequence is VQAQAQEQKQAQ. N755, N759, N774, and N835 each carry an N-linked (GlcNAc...) asparagine glycan. The disordered stretch occupies residues 884-906; the sequence is SMQPLSLTPQDKPEVSANDDTSH. N-linked (GlcNAc...) asparagine glycosylation is found at N911, N955, N1049, N1156, and N1165. The interval 993 to 1107 is required for binding to host erythrocyte cell membrane; sequence QLSFDLYNKY…EESIQTEDNY (115 aa). The segment covering 1190 to 1203 has biased composition (polar residues); the sequence is VSESGSDTLEQSQP. The disordered stretch occupies residues 1190 to 1220; the sequence is VSESGSDTLEQSQPKKPASTHVGAESNTITT. N-linked (GlcNAc...) asparagine glycans are attached at residues N1436 and N1517. EGF-like domains are found at residues 1521-1561 and 1562-1610; these read HQCV…VENP and NPTC…FCSS. 6 disulfide bridges follow: C1523/C1534, C1528/C1544, C1546/C1557, C1565/C1578, C1572/C1592, and C1594/C1608. The GPI-anchor amidated serine moiety is linked to residue S1609. A propeptide spans 1610–1630 (removed in mature form); the sequence is SSNFLGISFLLILMLILYSFI.

Forms a complex composed of subunits p83, p30, p38, and p42 which remain non-covalently associated; the complex is formed at the merozoite surface prior to egress from host erythrocytes. Forms a complex composed of processed MSP1 subunits, MSP6 subunit p36 and MSP7; the complex is formed at the merozoite surface prior to egress from host erythrocytes. Within the complex, interacts (via subunit p38) with MSP6 subunit p36 and (via subunits p83, p30 and p38) with MSP7 (via subunit p22). Forms a complex composed of MSP1, MSP6, DBLMSP1 and DBLMSP2. Within the complex, interacts (via subunit p38) with DBLMSP1 and DBLMSP2. Forms a complex composed of MSP1, and rhoptry proteins RhopH3, RAP1 and CLAG9/RhopH3. Within the complex, interacts (via subunits p42 and p19) with RhopH3 (via C-terminus). Forms a complex composed of MSP1, MSP6, MSP7, MSP9 and MSP3; within the complex, MSP6 and MSP9 mediate the binding to the host erythrocyte. Interacts (via subunits p19 and p42) with MSP9; the interaction is direct; MSP1 subunits p19 or p42, and MSP9 form a co-ligand complex that interacts with host SLC4A1/Band 3 protein. May interact with PFD6. Interacts with host spectrin. In terms of assembly, interacts with host glycophorin GYPA in a sialic acid-independent manner. As to quaternary structure, interacts with host proinflammatory cytokine S100P; the interaction blocks S100P inflammatory and chemotactic activities. Interacts with host SLC4A1/Band 3 (via 5ABC region) on the host erythrocyte surface in a sialic acid-independent manner. In terms of processing, the p190 precursor is cleaved by SUB1 prior to merozoite egress into 4 subunits p83, p30, p38, and p42 which remain non-covalently associated. SUB1-mediated proteolytic cleavage occurs in an orderly manner; the first cleavage occurs at the p83/p30 site, followed by cleavage at the p30/p38 site, the last cleavage occurs at the p38/p42 site. The order of cleavage is essential for parasite viability. SUB1-mediated processing is essential for merozoite egress. In a second processing step during erythrocyte invasion, p42 is cleaved by SUB2 into p33 and p19; the latter remains attached to the merozoite surface via its GPI-anchor and stays on the surface during the subsequent ring stage.

Its subcellular location is the cell membrane. It localises to the secreted. The protein resides in the vacuole membrane. Functionally, during the asexual blood stage, involved in merozoite egress from host erythrocytes possibly via its interaction with the host cytoskeleton protein spectrin resulting in the destabilization of the host cytoskeleton and thus leading to erythrocyte cell membrane rupture. Involved in the binding to host erythrocytes and is required for host erythrocyte invasion. In terms of biological role, by binding to host proinflammatory cytokine S100P may interfere with host immune responses. Involved in merozoite invasion of host erythrocytes. May play a role in the biogenesis and/or function of the food vacuole during the intraerythrocytic development. The sequence is that of Merozoite surface protein 1 from Plasmodium falciparum (isolate K1 / Thailand).